Reading from the N-terminus, the 68-residue chain is Large ribosomal subunit protein uL30 (68 aa).

It belongs to the universal ribosomal protein uL30 family. In terms of assembly, part of the 50S ribosomal subunit.

This chain is Large ribosomal subunit protein uL30, found in Bartonella quintana (strain Toulouse) (Rochalimaea quintana).